Here is a 235-residue protein sequence, read N- to C-terminus: Large ribosomal subunit protein uL1 (235 aa).

This sequence belongs to the universal ribosomal protein uL1 family. Part of the 50S ribosomal subunit.

In terms of biological role, binds directly to 23S rRNA. The L1 stalk is quite mobile in the ribosome, and is involved in E site tRNA release. Protein L1 is also a translational repressor protein, it controls the translation of the L11 operon by binding to its mRNA. This Prochlorococcus marinus (strain MIT 9515) protein is Large ribosomal subunit protein uL1.